The chain runs to 113 residues: Ribonuclease P protein component (113 aa).

It belongs to the RnpA family. In terms of assembly, consists of a catalytic RNA component (M1 or rnpB) and a protein subunit.

The enzyme catalyses Endonucleolytic cleavage of RNA, removing 5'-extranucleotides from tRNA precursor.. In terms of biological role, RNaseP catalyzes the removal of the 5'-leader sequence from pre-tRNA to produce the mature 5'-terminus. It can also cleave other RNA substrates such as 4.5S RNA. The protein component plays an auxiliary but essential role in vivo by binding to the 5'-leader sequence and broadening the substrate specificity of the ribozyme. This is Ribonuclease P protein component from Vesicomyosocius okutanii subsp. Calyptogena okutanii (strain HA).